The primary structure comprises 204 residues: Large ribosomal subunit protein eL15 (204 aa).

Belongs to the eukaryotic ribosomal protein eL15 family. Component of the large ribosomal subunit.

The protein localises to the cytoplasm. In terms of biological role, component of the large ribosomal subunit. The ribosome is a large ribonucleoprotein complex responsible for the synthesis of proteins in the cell. The chain is Large ribosomal subunit protein eL15 (rpl15) from Anguilla japonica (Japanese eel).